The primary structure comprises 541 residues: Propionyl-CoA carboxylase beta chain, mitochondrial (541 aa).

Residues 1–28 constitute a mitochondrion transit peptide; it reads MAAVIRIRAMAAGTRLRVLNCGLGTTIR. A CoA carboxyltransferase N-terminal domain is found at 34-292; the sequence is PVSVNERIEN…SNQDPASIRE (259 aa). The segment at 34 to 535 is carboxyltransferase; sequence PVSVNERIEN…SKKVHRPWRK (502 aa). Ser73 is subject to Phosphoserine. An N6-acetyllysine; alternate modification is found at Lys101. Lys101 carries the N6-succinyllysine; alternate modification. Lys250 bears the N6-succinyllysine mark. In terms of domain architecture, CoA carboxyltransferase C-terminal spans 296–535; it reads PSDRLVPELD…SKKVHRPWRK (240 aa). The acyl-CoA binding stretch occupies residues 327–360; the sequence is DEREFFEIMPNYAKNIVIGFARMNGRTVGIVGNQ. An N6-acetyllysine; alternate mark is found at Lys476 and Lys491. An N6-succinyllysine; alternate mark is found at Lys476 and Lys491.

The protein belongs to the AccD/PCCB family. In terms of assembly, the holoenzyme is a dodecamer composed of 6 PCCA/alpha subunits and 6 PCCB/beta subunits.

Its subcellular location is the mitochondrion matrix. It carries out the reaction propanoyl-CoA + hydrogencarbonate + ATP = (S)-methylmalonyl-CoA + ADP + phosphate + H(+). It catalyses the reaction butanoyl-CoA + hydrogencarbonate + ATP = (2S)-ethylmalonyl-CoA + ADP + phosphate + H(+). Its pathway is metabolic intermediate metabolism; propanoyl-CoA degradation; succinyl-CoA from propanoyl-CoA: step 1/3. Its function is as follows. This is one of the 2 subunits of the biotin-dependent propionyl-CoA carboxylase (PCC), a mitochondrial enzyme involved in the catabolism of odd chain fatty acids, branched-chain amino acids isoleucine, threonine, methionine, and valine and other metabolites. Propionyl-CoA carboxylase catalyzes the carboxylation of propionyl-CoA/propanoyl-CoA to D-methylmalonyl-CoA/(S)-methylmalonyl-CoA. Within the holoenzyme, the alpha subunit catalyzes the ATP-dependent carboxylation of the biotin carried by the biotin carboxyl carrier (BCC) domain, while the beta subunit then transfers the carboxyl group from carboxylated biotin to propionyl-CoA. Propionyl-CoA carboxylase also significantly acts on butyryl-CoA/butanoyl-CoA, which is converted to ethylmalonyl-CoA/(2S)-ethylmalonyl-CoA. Other alternative minor substrates include (2E)-butenoyl-CoA/crotonoyl-CoA. The polypeptide is Propionyl-CoA carboxylase beta chain, mitochondrial (Rattus norvegicus (Rat)).